We begin with the raw amino-acid sequence, 399 residues long: MAEGIDRKMDDRMEFTTSADVTVAPTFQDMHLKENLLRGIYAYGYESPSAVQSRAIVQICKGRDTIAQAQSGTGKTATFSISMLQVIDTAVRETQALVLSPTRELATQIQSVVMALGDYMNVQCHACIGGTNVGEDIRKLDYGQHIVSGTPGRVADMIRRRNLRTRHIKMLVLDEADELLNRGFREQIYDVYRYLPPATQVVVVSATLPYDVLDMTTKFMTDPVRILVKRDELTLEGLKQYFIAVEKEEWKFDTLCDLYDTLTITQAVIFCNTRRKVDWLTDKMREANFTVSSMHGEMPQKERDSIMQDFRQGNSRVLISTDVWARGIDVQQVSLVINYDLPVNRENYIHRIGRSGRFGRKGVAINFVTSEDVRILRDIELYYSTQIDEMPMNVADLLT.

The Q motif motif lies at 25–53 (PTFQDMHLKENLLRGIYAYGYESPSAVQS). One can recognise a Helicase ATP-binding domain in the interval 56–226 (IVQICKGRDT…TKFMTDPVRI (171 aa)). Position 69–76 (69–76 (AQSGTGKT)) interacts with ATP. Positions 174-177 (DEAD) match the DEAD box motif. Residues 237–398 (GLKQYFIAVE…EMPMNVADLL (162 aa)) form the Helicase C-terminal domain.

This sequence belongs to the DEAD box helicase family. DDX48/FAL1 subfamily.

Its subcellular location is the nucleus. It localises to the nucleolus. The enzyme catalyses ATP + H2O = ADP + phosphate + H(+). ATP-dependent RNA helicase involved in 40S ribosomal subunit biogenesis. Required for the processing and cleavage of 35S pre-rRNA at sites A0, A1, and A2, leading to mature 18S rRNA. The polypeptide is ATP-dependent RNA helicase fal1 (fal1) (Sclerotinia sclerotiorum (strain ATCC 18683 / 1980 / Ss-1) (White mold)).